The following is a 261-amino-acid chain: MTHQTHAYHMVNPSPWPLTGALSALLMTSGLIMWFHYNSMSLLTLGFTTNLLTMYQWWRDVIREGTFQGHHTPIVQKGLRYGMVLFIVSEVFFFAGFFWAFYHSSLAPTPELGGCWPPTGIIPLNPLEVPLLNTSVLLASGVSITWAHHSLMEGNRKHMLQALFITISLGVYFTLLQASEYYETSFTISDGVYGSTFFMATGFHGLHVIIGSTFLIVCFLRQLYYHFTSNHHFGFEAAAWYWHFVDVVWLFLYVSIYWWGS.

The Mitochondrial matrix segment spans residues 1-15; that stretch reads MTHQTHAYHMVNPSP. The chain crosses the membrane as a helical span at residues 16–34; that stretch reads WPLTGALSALLMTSGLIMW. Residues 35-40 are Mitochondrial intermembrane-facing; it reads FHYNSM. Residues 41-66 form a helical membrane-spanning segment; sequence SLLTLGFTTNLLTMYQWWRDVIREGT. Residues 67 to 72 are Mitochondrial matrix-facing; sequence FQGHHT. A helical membrane pass occupies residues 73–105; that stretch reads PIVQKGLRYGMVLFIVSEVFFFAGFFWAFYHSS. The Mitochondrial intermembrane portion of the chain corresponds to 106-128; sequence LAPTPELGGCWPPTGIIPLNPLE. A helical membrane pass occupies residues 129 to 152; sequence VPLLNTSVLLASGVSITWAHHSLM. Over 153–155 the chain is Mitochondrial matrix; it reads EGN. The helical transmembrane segment at 156 to 183 threads the bilayer; sequence RKHMLQALFITISLGVYFTLLQASEYYE. Topologically, residues 184–190 are mitochondrial intermembrane; the sequence is TSFTISD. The chain crosses the membrane as a helical span at residues 191–223; the sequence is GVYGSTFFMATGFHGLHVIIGSTFLIVCFLRQL. Topologically, residues 224–232 are mitochondrial matrix; sequence YYHFTSNHH. A helical membrane pass occupies residues 233 to 256; sequence FGFEAAAWYWHFVDVVWLFLYVSI. At 257–261 the chain is on the mitochondrial intermembrane side; it reads YWWGS.

It belongs to the cytochrome c oxidase subunit 3 family. As to quaternary structure, component of the cytochrome c oxidase (complex IV, CIV), a multisubunit enzyme composed of 14 subunits. The complex is composed of a catalytic core of 3 subunits MT-CO1, MT-CO2 and MT-CO3, encoded in the mitochondrial DNA, and 11 supernumerary subunits COX4I, COX5A, COX5B, COX6A, COX6B, COX6C, COX7A, COX7B, COX7C, COX8 and NDUFA4, which are encoded in the nuclear genome. The complex exists as a monomer or a dimer and forms supercomplexes (SCs) in the inner mitochondrial membrane with NADH-ubiquinone oxidoreductase (complex I, CI) and ubiquinol-cytochrome c oxidoreductase (cytochrome b-c1 complex, complex III, CIII), resulting in different assemblies (supercomplex SCI(1)III(2)IV(1) and megacomplex MCI(2)III(2)IV(2)).

The protein resides in the mitochondrion inner membrane. It catalyses the reaction 4 Fe(II)-[cytochrome c] + O2 + 8 H(+)(in) = 4 Fe(III)-[cytochrome c] + 2 H2O + 4 H(+)(out). In terms of biological role, component of the cytochrome c oxidase, the last enzyme in the mitochondrial electron transport chain which drives oxidative phosphorylation. The respiratory chain contains 3 multisubunit complexes succinate dehydrogenase (complex II, CII), ubiquinol-cytochrome c oxidoreductase (cytochrome b-c1 complex, complex III, CIII) and cytochrome c oxidase (complex IV, CIV), that cooperate to transfer electrons derived from NADH and succinate to molecular oxygen, creating an electrochemical gradient over the inner membrane that drives transmembrane transport and the ATP synthase. Cytochrome c oxidase is the component of the respiratory chain that catalyzes the reduction of oxygen to water. Electrons originating from reduced cytochrome c in the intermembrane space (IMS) are transferred via the dinuclear copper A center (CU(A)) of subunit 2 and heme A of subunit 1 to the active site in subunit 1, a binuclear center (BNC) formed by heme A3 and copper B (CU(B)). The BNC reduces molecular oxygen to 2 water molecules using 4 electrons from cytochrome c in the IMS and 4 protons from the mitochondrial matrix. The protein is Cytochrome c oxidase subunit 3 (MT-CO3) of Canis lupus (Gray wolf).